A 193-amino-acid polypeptide reads, in one-letter code: Thymidine kinase (193 aa).

An ATP-binding site is contributed by 9–16; sequence AAMNAGKS.

The protein belongs to the thymidine kinase family.

The catalysed reaction is thymidine + ATP = dTMP + ADP + H(+). Its function is as follows. This thymidine kinase is one of the enzymes that catalyze DNA precursor synthesis. Although tk is a nonessential gene, some strains of host E.coli do not support the growth of phages that lack this gene. In Escherichia coli (Bacteriophage T4), this protein is Thymidine kinase (TK).